Here is a 439-residue protein sequence, read N- to C-terminus: Probable serine/threonine-protein kinase WNK6 (439 aa).

Residues 1 to 30 (MMPPKPAAEDVADEQPEPPDEDPDVAEADP) are disordered. A compositionally biased stretch (acidic residues) spans 10–27 (DVADEQPEPPDEDPDVAE). In terms of domain architecture, Protein kinase spans 35-293 (LRYREIIGSG…ASELLKSPFL (259 aa)). ATP is bound by residues 116–119 (TELF) and K166. The active-site Proton acceptor is D183.

Belongs to the protein kinase superfamily. Ser/Thr protein kinase family. WNK subfamily.

The enzyme catalyses L-seryl-[protein] + ATP = O-phospho-L-seryl-[protein] + ADP + H(+). It catalyses the reaction L-threonyl-[protein] + ATP = O-phospho-L-threonyl-[protein] + ADP + H(+). The chain is Probable serine/threonine-protein kinase WNK6 (WNK6) from Oryza sativa subsp. japonica (Rice).